A 471-amino-acid polypeptide reads, in one-letter code: ATP synthase subunit beta (471 aa).

153-160 (GGAGVGKT) is an ATP binding site.

It belongs to the ATPase alpha/beta chains family. F-type ATPases have 2 components, CF(1) - the catalytic core - and CF(0) - the membrane proton channel. CF(1) has five subunits: alpha(3), beta(3), gamma(1), delta(1), epsilon(1). CF(0) has three main subunits: a(1), b(2) and c(9-12). The alpha and beta chains form an alternating ring which encloses part of the gamma chain. CF(1) is attached to CF(0) by a central stalk formed by the gamma and epsilon chains, while a peripheral stalk is formed by the delta and b chains.

It is found in the cell membrane. It carries out the reaction ATP + H2O + 4 H(+)(in) = ADP + phosphate + 5 H(+)(out). Produces ATP from ADP in the presence of a proton gradient across the membrane. The catalytic sites are hosted primarily by the beta subunits. This Levilactobacillus brevis (strain ATCC 367 / BCRC 12310 / CIP 105137 / JCM 1170 / LMG 11437 / NCIMB 947 / NCTC 947) (Lactobacillus brevis) protein is ATP synthase subunit beta.